The chain runs to 31 residues: Small protein MgtS (31 aa).

Residues 1-4 lie on the Periplasmic side of the membrane; it reads MLGN. Residues 5–25 form a helical membrane-spanning segment; it reads MNVFMAVLGIILFSGFLAAYF. The Cytoplasmic portion of the chain corresponds to 26–31; it reads SHKWDD.

Interacts with MgtA.

The protein localises to the cell inner membrane. Its function is as follows. Modulates intracellular Mg(2+) levels to maintain cellular integrity upon Mg(2+) limitation. Acts by binding and stabilizing the Mg(2+) transporter MgtA, thereby leading to increased intracellular level of Mg(2+). May inhibit FtsH proteolysis of MgtA. In Escherichia coli (strain K12), this protein is Small protein MgtS.